The sequence spans 460 residues: tRNA modification GTPase MnmE (460 aa).

(6S)-5-formyl-5,6,7,8-tetrahydrofolate-binding residues include Arg24, Glu81, and Lys121. The TrmE-type G domain maps to 218 to 384; sequence GLVVAIAGPP…MVEALAGFAA (167 aa). GTP is bound by residues 228–233, 247–253, and 272–275; these read NVGKST, SPHAGTT, and DTAG. Residues Ser232 and Thr253 each coordinate Mg(2+). Lys460 lines the (6S)-5-formyl-5,6,7,8-tetrahydrofolate pocket.

This sequence belongs to the TRAFAC class TrmE-Era-EngA-EngB-Septin-like GTPase superfamily. TrmE GTPase family. In terms of assembly, homodimer. Heterotetramer of two MnmE and two MnmG subunits. K(+) is required as a cofactor.

The protein localises to the cytoplasm. Exhibits a very high intrinsic GTPase hydrolysis rate. Involved in the addition of a carboxymethylaminomethyl (cmnm) group at the wobble position (U34) of certain tRNAs, forming tRNA-cmnm(5)s(2)U34. This chain is tRNA modification GTPase MnmE, found in Rhodopseudomonas palustris (strain HaA2).